The following is a 140-amino-acid chain: uncharacterized protein (140 aa).

Residues 1–22 form the signal peptide; that stretch reads MRLRWQTIVLLLLILGGASASA.

This is an uncharacterized protein from Archaeoglobus fulgidus (strain ATCC 49558 / DSM 4304 / JCM 9628 / NBRC 100126 / VC-16).